Here is an 89-residue protein sequence, read N- to C-terminus: Large ribosomal subunit protein eL34 (89 aa).

The disordered stretch occupies residues 1-22; it reads MPAPRYKSGSSKKVYRKAPGNS.

The protein belongs to the eukaryotic ribosomal protein eL34 family.

This is Large ribosomal subunit protein eL34 from Methanococcus maripaludis (strain C5 / ATCC BAA-1333).